The chain runs to 362 residues: Peptide chain release factor 1 (362 aa).

Gln237 carries the post-translational modification N5-methylglutamine.

The protein belongs to the prokaryotic/mitochondrial release factor family. In terms of processing, methylated by PrmC. Methylation increases the termination efficiency of RF1.

It is found in the cytoplasm. Functionally, peptide chain release factor 1 directs the termination of translation in response to the peptide chain termination codons UAG and UAA. The protein is Peptide chain release factor 1 of Aeromonas salmonicida (strain A449).